The sequence spans 783 residues: Centrosomal protein of 89 kDa (783 aa).

A disordered region spans residues 28-49; that stretch reads PKAAVPRTPPPRSPNPSPERPR. Positions 34–45 are enriched in pro residues; that stretch reads RTPPPRSPNPSP. At S50 the chain carries Phosphoserine. Disordered regions lie at residues 63-157 and 176-226; these read GRTV…DDLY and DENI…DITG. Polar residues predominate over residues 94-107; it reads ATTSQLRPRPNWQS. Composition is skewed to basic and acidic residues over residues 139 to 155 and 196 to 214; these read ELGDVSAREDRGGHSDD and QQKDGKHPVLNLKDEKPPL. Coiled coils occupy residues 234–333 and 369–719; these read EITR…SRYQ and LLLA…GELE.

The protein resides in the cytoplasm. It is found in the cytosol. Its subcellular location is the cytoskeleton. The protein localises to the microtubule organizing center. It localises to the centrosome. The protein resides in the spindle pole. It is found in the centriole. Its subcellular location is the mitochondrion intermembrane space. Required for ciliogenesis. Also plays a role in mitochondrial metabolism where it may modulate complex IV activity. This is Centrosomal protein of 89 kDa (CEP89) from Homo sapiens (Human).